Reading from the N-terminus, the 212-residue chain is Thymidylate kinase (212 aa).

Alanine 2 carries the N-acetylalanine modification. ATP-binding positions include 16–21 (RAGKST) and arginine 97. The interval 133–157 (LQLQLADAAKRGAFGHERYENGAFQ) is LID. N6-acetyllysine is present on lysine 169. The ATP site is built by lysine 182 and arginine 192.

Belongs to the thymidylate kinase family. In terms of assembly, homodimer. Mg(2+) serves as cofactor.

It catalyses the reaction dTMP + ATP = dTDP + ADP. Its pathway is pyrimidine metabolism; dTTP biosynthesis. Catalyzes the phosphorylation of thymidine monophosphate (dTMP) to thymidine diphosphate (dTDP), the immediate precursor for the DNA building block dTTP, with ATP as the preferred phosphoryl donor in the presence of Mg(2+). This chain is Thymidylate kinase (DTYMK), found in Homo sapiens (Human).